We begin with the raw amino-acid sequence, 359 residues long: Methylthioribose-1-phosphate isomerase (359 aa).

Residues 52-54 (RGA), Arg90, and Gln200 each bind substrate. Residue Asp241 is the Proton donor of the active site. Position 251–252 (251–252 (NK)) interacts with substrate.

The protein belongs to the eIF-2B alpha/beta/delta subunits family. MtnA subfamily.

The enzyme catalyses 5-(methylsulfanyl)-alpha-D-ribose 1-phosphate = 5-(methylsulfanyl)-D-ribulose 1-phosphate. The protein operates within amino-acid biosynthesis; L-methionine biosynthesis via salvage pathway; L-methionine from S-methyl-5-thio-alpha-D-ribose 1-phosphate: step 1/6. In terms of biological role, catalyzes the interconversion of methylthioribose-1-phosphate (MTR-1-P) into methylthioribulose-1-phosphate (MTRu-1-P). This chain is Methylthioribose-1-phosphate isomerase, found in Sulfurimonas denitrificans (strain ATCC 33889 / DSM 1251) (Thiomicrospira denitrificans (strain ATCC 33889 / DSM 1251)).